The sequence spans 229 residues: IDRKLERYDSPRYTYMVIDKKNPVDVFIVTSYPDEWADIYTSQNYQHIDPIVLTAFKRISPFAWDENITILSDLKSSKIFALSKKYNIVNGFTFVLHDHMNNLAMLSLIMDNNADKGLNSRIESDKDRLQMNLIKIHEKMLMLEQNKLGVSNGKNTDTSGKGILSPRENEVLHWASMGKTYPEIALIAGITTRTVKHHMGNVVKKLGVINARQAIRLGVELELIKPVLV.

One can recognise an HTH luxR-type domain in the interval 157 to 222; sequence DTSGKGILSP…QAIRLGVELE (66 aa). Positions 181-200 form a DNA-binding region, H-T-H motif; the sequence is YPEIALIAGITTRTVKHHMG.

The protein belongs to the autoinducer-regulated transcriptional regulatory protein family.

Its function is as follows. Probable transcriptional activator. Binds to an autoinducer molecule. The protein is Transcriptional activator protein YukR (yukR) of Yersinia ruckeri.